Reading from the N-terminus, the 87-residue chain is Toxin CsEv3 (87 aa).

An N-terminal signal peptide occupies residues 1-19; that stretch reads MNSLLMITACLFLIGTVWA. The LCN-type CS-alpha/beta domain maps to 20 to 85; the sequence is KEGYLVNKST…TYPLPNKSCG (66 aa). 4 disulfide bridges follow: C31/C84, C35/C60, C44/C65, and C48/C67. C84 is subject to Cysteine amide.

It belongs to the long (4 C-C) scorpion toxin superfamily. Sodium channel inhibitor family. Beta subfamily. As to expression, expressed by the venom gland.

It is found in the secreted. In terms of biological role, beta toxins bind voltage-independently at site-4 of sodium channels (Nav) and shift the voltage of activation toward more negative potentials thereby affecting sodium channel activation and promoting spontaneous and repetitive firing. Induces immediate paralysis in crickets after injection, with a total paralysis occurring within 15-30 minutes and lasting for 1-2 hours. Is also lethal to vertebrate (chicks) when injected in very high dosages (more that 100 mg/kg). This chain is Toxin CsEv3, found in Centruroides sculpturatus (Arizona bark scorpion).